Consider the following 1381-residue polypeptide: Peroxisomal ATPase PEX6 (1381 aa).

The segment covering 1–10 (MTAPNSTPAS) has biased composition (polar residues). Disordered stretches follow at residues 1–23 (MTAPNSTPASSRKRVRRRRQDKP), 247–315 (VRTS…DNLS), 333–374 (TVTG…DRPR), and 467–499 (YSSRSATRSHHSRHDSRNSSFFEAQSQKSNPPA). Residues 11 to 20 (SRKRVRRRRQ) show a composition bias toward basic residues. Acidic residues-rich tracts occupy residues 270–284 (AEDDEDAYFSAAEED) and 296–315 (TDADDTEFEPQAGEDEDNLS). Composition is skewed to polar residues over residues 333 to 345 (TVTGQSTIGTGTP), 355 to 367 (GPGSVISSYTATT), and 487 to 499 (FFEAQSQKSNPPA). 1031-1038 (GPPGTGKT) lines the ATP pocket. 2 stretches are compositionally biased toward basic and acidic residues: residues 1294-1305 (GAKDKDKKKEGA) and 1337-1350 (STKKDGKGKGKAAD). A disordered region spans residues 1294–1381 (GAKDKDKKKE…GGDEDEGLYD (88 aa)). Positions 1372–1381 (GGDEDEGLYD) are enriched in acidic residues.

Belongs to the AAA ATPase family. As to quaternary structure, interacts with PEX1; forming the PEX1-PEX6 AAA ATPase complex, which is composed of a heterohexamer formed by a trimer of PEX1-PEX6 dimers.

The protein localises to the cytoplasm. The protein resides in the cytosol. It is found in the peroxisome membrane. The catalysed reaction is ATP + H2O = ADP + phosphate + H(+). Its function is as follows. Component of the PEX1-PEX6 AAA ATPase complex, a protein dislocase complex that mediates the ATP-dependent extraction of the PEX5 receptor from peroxisomal membranes, an essential step for PEX5 recycling. Specifically recognizes PEX5 monoubiquitinated at 'Cys-6', and pulls it out of the peroxisome lumen through the PEX2-PEX10-PEX12 retrotranslocation channel. Extraction by the PEX1-PEX6 AAA ATPase complex is accompanied by unfolding of the TPR repeats and release of bound cargo from PEX5. The sequence is that of Peroxisomal ATPase PEX6 (pex-6) from Neurospora crassa (strain ATCC 24698 / 74-OR23-1A / CBS 708.71 / DSM 1257 / FGSC 987).